The following is a 104-amino-acid chain: L-rhamnose mutarotase (104 aa).

Tyrosine 18 lines the substrate pocket. Histidine 22 functions as the Proton donor in the catalytic mechanism. Residues tyrosine 41 and 76-77 (WW) each bind substrate.

This sequence belongs to the rhamnose mutarotase family. As to quaternary structure, homodimer.

Its subcellular location is the cytoplasm. It catalyses the reaction alpha-L-rhamnose = beta-L-rhamnose. The protein operates within carbohydrate metabolism; L-rhamnose metabolism. In terms of biological role, involved in the anomeric conversion of L-rhamnose. This chain is L-rhamnose mutarotase, found in Listeria monocytogenes serovar 1/2a (strain ATCC BAA-679 / EGD-e).